Reading from the N-terminus, the 376-residue chain is Queuine tRNA-ribosyltransferase (376 aa).

Aspartate 93 acts as the Proton acceptor in catalysis. Substrate contacts are provided by residues 93–97, aspartate 147, glutamine 190, and glycine 217; that span reads DSGGF. The segment at 248 to 254 is RNA binding; sequence GVGKPGD. Aspartate 267 serves as the catalytic Nucleophile. Positions 305, 307, 310, and 336 each coordinate Zn(2+).

This sequence belongs to the queuine tRNA-ribosyltransferase family. In terms of assembly, homodimer. Within each dimer, one monomer is responsible for RNA recognition and catalysis, while the other monomer binds to the replacement base PreQ1. Requires Zn(2+) as cofactor.

The enzyme catalyses 7-aminomethyl-7-carbaguanine + guanosine(34) in tRNA = 7-aminomethyl-7-carbaguanosine(34) in tRNA + guanine. It functions in the pathway tRNA modification; tRNA-queuosine biosynthesis. Functionally, catalyzes the base-exchange of a guanine (G) residue with the queuine precursor 7-aminomethyl-7-deazaguanine (PreQ1) at position 34 (anticodon wobble position) in tRNAs with GU(N) anticodons (tRNA-Asp, -Asn, -His and -Tyr). Catalysis occurs through a double-displacement mechanism. The nucleophile active site attacks the C1' of nucleotide 34 to detach the guanine base from the RNA, forming a covalent enzyme-RNA intermediate. The proton acceptor active site deprotonates the incoming PreQ1, allowing a nucleophilic attack on the C1' of the ribose to form the product. After dissociation, two additional enzymatic reactions on the tRNA convert PreQ1 to queuine (Q), resulting in the hypermodified nucleoside queuosine (7-(((4,5-cis-dihydroxy-2-cyclopenten-1-yl)amino)methyl)-7-deazaguanosine). The polypeptide is Queuine tRNA-ribosyltransferase (Dinoroseobacter shibae (strain DSM 16493 / NCIMB 14021 / DFL 12)).